The following is a 156-amino-acid chain: Small ribosomal subunit protein uS7 (156 aa).

It belongs to the universal ribosomal protein uS7 family. As to quaternary structure, part of the 30S ribosomal subunit. Contacts proteins S9 and S11.

One of the primary rRNA binding proteins, it binds directly to 16S rRNA where it nucleates assembly of the head domain of the 30S subunit. Is located at the subunit interface close to the decoding center, probably blocks exit of the E-site tRNA. This Gemmatimonas aurantiaca (strain DSM 14586 / JCM 11422 / NBRC 100505 / T-27) protein is Small ribosomal subunit protein uS7.